A 2592-amino-acid chain; its full sequence is MVLHPSDRRFPETNGVGGHSKDSSAKSGYTSLEPLAIVGFASHLAGDATDNENLWKHILEGQSASGPFPQNRLQGNQYFHPDPEHGGTCATKGGYFLKKDIDTFDASFFRLSEYDIAAMDPQQKILLENVYHAVENAGLPMESLAGSRTSVYVGSSTNDHAALTNEDLDFTIKNKATGTLPSLLANRVSWFYDLKGASIVIDTACSSSLVALHMACLDIRAGGSEMAIVSGINLLQHPASLMLLSNLGVLSPDGRSYAFDDRANGYGRGEGVITVVVKSLQAAIRDGDRVRALVRASGVSSDGKTAGITLPSEEEQKVLIRNVYASANLDVNETTYVEAHGTGTPVGDPLECKAIMSAFRTQRRKQTLYIGSIKANIGHLEGGAGLAGLVKAIMMLEKQIIPPIAGLQRLNPLISQDGHNVCFTREAIPWPKSHVRRASVNSFGFGGTNAHVVLESPDMFLHGRSLDTTSTSLVRLPNGYLNGINGQKTPPEDSPKSYVFMISANDENGIQRNAMLLKKYIDNYLKTQCSFSEDQFMKDLVYTLSEKRSRLKWRASIIASSLTELSQQLTGGTLPKFRAANTEPGISFVFTGQGAQWPGMGKMLMEFPIFRQSVEAASLHLQKQGSQWTLHDAFDPIEDSKTDINNPIQSQTACTVLQVALVDLLQSWNISPSIVIGHSSGEIAAAYCAGAISREAAWNISYYRGLVSSILVKGGGGAMIAVGLHPQEAQKYINQLSPELQCMVQIGCYNSPNNTTITGERNAILILQALLDENGVFNRVLATPVAYHSQYMQPVADTYSTLLRLSDLSVGRMRQPQIDEEIVMISSVTGEPIGAKRLQDPQYWTQNLISPVKFMNALHQLKNFAPQFNLQELLELGPHSALQSAIRESMADGQSTAPQIRYSHTITRKKMTYSTILSTAAGLFCRGYPVNLVATSCTDSHHGTLLTDLPGYEFNHDAGLRAESRRMKNSRLPEFPRHELLGSPDPDWDRREPRWRNFLRTSELPWLRDNKVNGGIIFPGVGYSIMAMEAVKQISDRSISIAGYRLKQISMEAALIVPDTRDGLEVMTSLREVYDEGSTTSPKYQFSVKTHDTMRNEWIEHCSGFIESKCESDSIEDMGTWRPLPWDAVHDLQFSEESCTQIGSISAFYDALERSGFDLGPTLKNLVDVRTSATSPHCMTKMAAPSIAEHMPKGYNFPYIIHPSTMESMAHAILHVCTTKEAPVGSALLARYIDNIWISNKIPMDPGHLFVTVADGEQVSPGKWRCAITVWNDATKEVVIQIRGTELCLLSAGRGDQKTVPECFLVKWYPSLDLVTDKLPFASLSSPETGVTEARHAHKTYEQLCTLYIARALKSLHGYDRKLLPQHLQQYLDWMVRQTMDSDAHTMRAILVENEVKLKEESGMLEALRTQAQGLGSRGELLVNVGDHIVPLIKGEKDPQSIIIGGNDLRPWTLDQDLSGNIKNVLSDNLKALRHGQGQLKVLEIGTGFGSVTAHIIKALTSVEDMSQTVFGKYQYTNKHNSSFEDVRQKCGDWLSLMDFQVLDVDQSVAEQGFEEHSYDLVISAHAFTRTVSLERSLKNAHSLLKPGGKLLVIENVQPQYKSTPFVYGLFPGWWHSTEPFRSTTPLVSEDKWVELLEATGFTTSSVKDVENEKSNETCLFLSTAIRTKELIAAPPFDDIVLTHHAYDPKNLVSSLLAAIKQISGLPVIVVPFSQLSHRKMERSFCIVVGELGQGYLDLSCVNEDIYREMKRLLLTCQNLLWISLDDVDYPKAALSTGLVRTLRWEREMDKINFLTLKFAQSSSHVPEIVSAVTSLYQHYFDGKVEASPNSEFLYKDGSFWVNRLYPAKTANNFLQSHISEAPQSQMLGDNVDRSLKARFKGSGRQGLLVWSDDEALSQPLSASEIQIDVQASGLTFQDGMAIRGDIDQHVFGKQVAGTVTQVGQKVEALEPGDHVMALLVGSEQHSLSRSIRVNANFAQRLSPDADFMEAATIPTTFTAVHYALHNVARVMESEKVLVHGAMQAAGQAAIQLAKLAGADVFVTVKTFEQKQKIETKYGIPENHVFIANEHLDAGIKEATGGASGVDIVLNFLHGSATRSAWQCVGMMGRFVDMALKAPGRHRGLDMSPFSRNAMYIGVDIAALGTAHHPSIMKAFSKVGELFRQRLIFGPGHKPFSYNNFGAAMIHIQNDSNMDTAVIVPKADDVIQVVPCKYTAYEFPTDATYVIAGGLGGLGRSAARWMCSKGARHLILISRSGARTASAKELLQDLASQGCKIKICQCDITDKDNLQIAMRECASGMPPIKGCLQSTMLLQDSIFENMSFQQFMAGIHPKVQGSLNVLDAIPDQLDFFLVLSSAASIVGNRGQANYNSANAFQDSLAEHLTSKGIPGMSVNLGNMLSVGWVAENEGALPLDLVYSSIDEPEFHALLEYHLDPRWGASQSVETCHTIAGVRSATRFNEDRTPIPSFMNDPLFTIIRESTNGTTDNGEQEREISISTLLKESSSVQVAASHVTEAIICKLSSVMSFPAAEIDPSQGLASYGVDSLVTVDFRTWIAKDMGANLSTADILDDGNIIGLSEKIARQSKFVKVA.

Basic and acidic residues predominate over residues 1–11; it reads MVLHPSDRRFP. The tract at residues 1 to 25 is disordered; it reads MVLHPSDRRFPETNGVGGHSKDSSA. The 425-residue stretch at 32-456 folds into the Ketosynthase family 3 (KS3) domain; the sequence is LEPLAIVGFA…GTNAHVVLES (425 aa). Catalysis depends on for beta-ketoacyl synthase activity residues Cys-205, His-340, and His-379. A malonyl-CoA:ACP transacylase (MAT) domain region spans residues 589-910; sequence VFTGQGAQWP…RYSHTITRKK (322 aa). Residues 978 to 1113 form an N-terminal hotdog fold region; that stretch reads HELLGSPDPD…GFIESKCESD (136 aa). Residues 978-1291 are dehydratase (DH) domain; the sequence is HELLGSPDPD…IRGTELCLLS (314 aa). The region spanning 978 to 1296 is the PKS/mFAS DH domain; sequence HELLGSPDPD…LCLLSAGRGD (319 aa). The interval 1140–1296 is C-terminal hotdog fold; sequence TQIGSISAFY…LCLLSAGRGD (157 aa). 2 residues coordinate S-adenosyl-L-methionine: Ile-1462 and Glu-1484. Positions 1483–1591 are methyltransferase (CMeT) domain; sequence LEIGTGFGSV…HSLLKPGGKL (109 aa). Positions 1887 to 2199 are enoyl reductase (ER) domain; the sequence is GLLVWSDDEA…NDSNMDTAVI (313 aa). Positions 2223-2398 are ketoreductase (KR) domain; that stretch reads ATYVIAGGLG…IPGMSVNLGN (176 aa). One can recognise a Carrier domain in the interval 2509–2586; sequence VAASHVTEAI…GLSEKIARQS (78 aa). An O-(pantetheine 4'-phosphoryl)serine modification is found at Ser-2546.

It carries out the reaction 5 malonyl-CoA + AH2 + 5 H(+) = 6-hydroxymellein + A + 5 CO2 + 5 CoA + H2O. The protein operates within secondary metabolite biosynthesis; terpenoid biosynthesis. Its function is as follows. Highly reducing polyketide synthase; part of the gene cluster that mediates the biosynthesis of chrodrimanin B, a meroterpenoid that acts as a potent blocker of insect GABA-gated chloride channels. The first step of the pathway is the biosynthesis of 6-hydroxymellein by the polyketide synthase cdmE. The prenyltransferase cdmH acts as a 6-hydroxymellein 5-farnesyltransferase and produces the hydrophobic metabolite verruculide C. The FAD-dependent monooxygenase cdmI further converts verruculide C into verruculide B. The terpene cyclase cdmG then produced the pentacyclic molecule 3-hydroxypentacecilide A, the backbone structure of chrodrimanin B, via folding the farnesyl moiety of the substrate into the chair-boat conformation. The short-chain dehydrogenase/reductase cdmF functions as the 3-OH dehydrogenase that oxidizes the C-3 hydroxyl group of 3-hydroxypentacecilide A and produces chrodrimanin C, the dehydrogenated product of 3-hydroxypentacecilide A. The cytochrome P450 monooxygenase cdmJ then accepts both 3-hydroxypentacecilide A and chrodrimanin C and functions as a C-7-beta-hydroxylase to produce respectively chrodrimanin H and chrodrimanin F. The dioxygenase cdmA accepts chrodrimanin H to afford chrodrimanin E, which is further transformed to chrodrimanin A by the dioxygenase cdmD. CdmA can also accept chrodrimanin C as substrate to convert it into verruculide A, which is further converted into chrodrimanin T by cdmD. The last step of the biosynthesis is proposed to be performed by the acetyltransferase cdmC which acetylates chrodrimanin A to yield chrodrimanin B. The pathway may also lead to the production of additional shunt products, including chrodrimanins T and U. The protein is 6-hydroxymellein synthase cdmE of Talaromyces verruculosus (Penicillium verruculosum).